The primary structure comprises 60 residues: Defensin-like protein 4 (60 aa).

Intrachain disulfides connect Cys4–Cys56, Cys17–Cys41, Cys26–Cys51, and Cys30–Cys53.

It belongs to the DEFL family. Protease inhibitor I18 (RTI/MTI-2) subfamily.

It localises to the secreted. Inhibits trypsin and chymotrypsin. In Brassica napus (Rape), this protein is Defensin-like protein 4.